Reading from the N-terminus, the 372-residue chain is Germination protease (372 aa).

A propeptide spanning residues 1 to 15 (MVKELNLEQYNVRTD) is cleaved from the precursor.

It belongs to the peptidase A25 family. In terms of assembly, homotetramer. Autoproteolytically processed. The inactive tetrameric zymogen termed p46 autoprocesses to a smaller form termed p41, which is active only during spore germination.

The catalysed reaction is Endopeptidase action with P4 Glu or Asp, P1 preferably Glu &gt; Asp, P1' hydrophobic and P2' Ala.. In terms of biological role, initiates the rapid degradation of small, acid-soluble proteins during spore germination. In Halalkalibacterium halodurans (strain ATCC BAA-125 / DSM 18197 / FERM 7344 / JCM 9153 / C-125) (Bacillus halodurans), this protein is Germination protease.